The following is a 165-amino-acid chain: Putative pre-16S rRNA nuclease (165 aa).

It belongs to the YqgF nuclease family.

The protein localises to the cytoplasm. Could be a nuclease involved in processing of the 5'-end of pre-16S rRNA. The chain is Putative pre-16S rRNA nuclease from Beijerinckia indica subsp. indica (strain ATCC 9039 / DSM 1715 / NCIMB 8712).